The sequence spans 543 residues: Nucleoside-triphosphatase ntp-1 (543 aa).

Residues 40 to 60 form a helical membrane-spanning segment; that stretch reads VYGFLLTCTCLLLILTIIPMS. E212 (proton acceptor) is an active-site residue. Residues 497-517 form a helical membrane-spanning segment; it reads QISNFFSFFVILIIVLAVALY.

This sequence belongs to the GDA1/CD39 NTPase family.

Its subcellular location is the golgi apparatus membrane. The enzyme catalyses a ribonucleoside 5'-triphosphate + H2O = a ribonucleoside 5'-diphosphate + phosphate + H(+). Functionally, seems to be able to hydrolyze CTP, ATP and UTP. This Caenorhabditis elegans protein is Nucleoside-triphosphatase ntp-1.